The primary structure comprises 328 residues: Probable nicotianamine synthase 6 (328 aa).

Belongs to the nicotianamine synthase (NAS)-like family.

It catalyses the reaction 3 S-adenosyl-L-methionine = nicotianamine + 3 S-methyl-5'-thioadenosine + 3 H(+). In terms of biological role, synthesizes nicotianamine, a polyamine that is the first intermediate in the synthesis of the phytosiderophores of the mugineic acid type found in gramineae which serves as a sensor for the physiological iron status within the plant, and/or might be involved in the transport of iron. The chain is Probable nicotianamine synthase 6 (NAS6) from Hordeum vulgare (Barley).